The sequence spans 62 residues: Potassium channel toxin alpha-KTx Tx773 (62 aa).

Residues 1–18 (MQKLFIVLLLFCILRLDA) form the signal peptide. Cystine bridges form between Cys-28–Cys-46, Cys-33–Cys-59, and Cys-37–Cys-61.

This sequence belongs to the short scorpion toxin superfamily. Potassium channel inhibitor family. Alpha-KTx 23 subfamily. In terms of tissue distribution, expressed by the venom gland.

Its subcellular location is the secreted. In terms of biological role, may block potassium channels. The chain is Potassium channel toxin alpha-KTx Tx773 from Buthus israelis (Israeli scorpion).